A 1366-amino-acid chain; its full sequence is DNA-directed RNA polymerase subunit beta' (1366 aa).

Over residues 1–23 (MTSSKPKKSSRVRKTSKNSKKNN) the composition is skewed to basic residues. Positions 1-25 (MTSSKPKKSSRVRKTSKNSKKNNKI) are disordered. Zn(2+)-binding residues include cysteine 248, cysteine 315, cysteine 322, and cysteine 325. The tract at residues 1290 to 1366 (DYTVDMPQSP…LQEEGLLSDE (77 aa)) is disordered. Over residues 1295 to 1305 (MPQSPTVSSTA) the composition is skewed to polar residues. Positions 1354–1366 (LEGLQEEGLLSDE) are enriched in low complexity.

It belongs to the RNA polymerase beta' chain family. RpoC2 subfamily. In terms of assembly, in cyanobacteria the RNAP catalytic core is composed of 2 alpha, 1 beta, 1 beta', 1 gamma and 1 omega subunit. When a sigma factor is associated with the core the holoenzyme is formed, which can initiate transcription. Zn(2+) is required as a cofactor.

The catalysed reaction is RNA(n) + a ribonucleoside 5'-triphosphate = RNA(n+1) + diphosphate. DNA-dependent RNA polymerase catalyzes the transcription of DNA into RNA using the four ribonucleoside triphosphates as substrates. In Prochlorococcus marinus (strain MIT 9515), this protein is DNA-directed RNA polymerase subunit beta'.